The sequence spans 331 residues: Phospho-N-acetylmuramoyl-pentapeptide-transferase (331 aa).

Transmembrane regions (helical) follow at residues 7–27 (IIYTIIIGFIITLILGPLTIP), 54–74 (TIGGIILIMSIIITSLTSGLI), 78–98 (LWIALAATVAFGIIGFIDDFI), 106–126 (LGLRAYQKLILQGTIAVILAI), 133–153 (IMGTEVIVPFVGEGITIAGFT), 154–174 (ITQTIDLGILYIPFIVFVVVA), 195–215 (IIAAFFALVAMSWGYVSLAIF), 249–269 (AIATIAVLMNVVLIIPIVGGI), and 311–331 (VVIVFWVVTVILCLVGMLALS).

The protein belongs to the glycosyltransferase 4 family. MraY subfamily. Mg(2+) is required as a cofactor.

The protein localises to the cell membrane. The catalysed reaction is UDP-N-acetyl-alpha-D-muramoyl-L-alanyl-gamma-D-glutamyl-meso-2,6-diaminopimeloyl-D-alanyl-D-alanine + di-trans,octa-cis-undecaprenyl phosphate = di-trans,octa-cis-undecaprenyl diphospho-N-acetyl-alpha-D-muramoyl-L-alanyl-D-glutamyl-meso-2,6-diaminopimeloyl-D-alanyl-D-alanine + UMP. It participates in cell wall biogenesis; peptidoglycan biosynthesis. Catalyzes the initial step of the lipid cycle reactions in the biosynthesis of the cell wall peptidoglycan: transfers peptidoglycan precursor phospho-MurNAc-pentapeptide from UDP-MurNAc-pentapeptide onto the lipid carrier undecaprenyl phosphate, yielding undecaprenyl-pyrophosphoryl-MurNAc-pentapeptide, known as lipid I. The sequence is that of Phospho-N-acetylmuramoyl-pentapeptide-transferase from Alkaliphilus metalliredigens (strain QYMF).